A 298-amino-acid polypeptide reads, in one-letter code: Putative ankyrin repeat-containing protein TP_0502 (298 aa).

ANK repeat units follow at residues 143–172, 176–205, 210–239, and 243–272; these read CFEENFIATVMDGNIDIVNLFLDAGFSAAL, RGTPVLSLAVREGQDEMAAQLIARGAPVDQ, RAYSALMEAAQIGNRTVARLLLHAGADPNV, and NGQTALVLAVGRKDHVLIRLLMDHGANPYL.

This Treponema pallidum (strain Nichols) protein is Putative ankyrin repeat-containing protein TP_0502.